The following is a 626-amino-acid chain: MAGERPPLRGPGPGPGEVPGEGPPGPGGTGGGPGRGRPSSYRALRSAVSSLARVDDFHCAEKIGAGFFSEVYKVRHRQSGQVMVLKMNKLPSNRGNTLREVQLMNRLRHPNILRFMGVCVHQGQLHALTEYMNGGTLEQLLSSPEPLSWPVRLHLALDIARGLRYLHSKGVFHRDLTSKNCLVRREDRGFTAVVGDFGLAEKIPVYREGARKEPLAVVGSPYWMAPEVLRGELYDEKADVFAFGIVLCELIARVPADPDYLPRTEDFGLDVPAFRTLVGDDCPLPFLLLAIHCCNLEPSTRAPFTEITQHLEWILEQLPEPAPLTRTALTHNQGSVARGGPSATLPRPDPRLSRSRSDLFLPPSPESPPNWGDNLTRVNPFSLREDLRGGKIKLLDTPSKPVLPLVPPSPFPSTQLPLVTTPETLVQPGTPARRCRSLPSSPELPRRMETALPGPGPPAVGPSAEEKMECEGSSPEPEPPGPAPQLPLAVATDNFISTCSSASQPWSPRSGPVLNNNPPAVVVNSPQGWAGEPWNRAQHSLPRAAALERTEPSPPPSAPREPDEGLPCPGCCLGPFSFGFLSMCPRPTPAVARYRNLNCEAGSLLCHRGHHAKPPTPSLQLPGARS.

The disordered stretch occupies residues 1–41 (MAGERPPLRGPGPGPGEVPGEGPPGPGGTGGGPGRGRPSSY). The span at 8 to 26 (LRGPGPGPGEVPGEGPPGP) shows a compositional bias: pro residues. The Protein kinase domain occupies 57–314 (FHCAEKIGAG…TEITQHLEWI (258 aa)). Residues 63-71 (IGAGFFSEV) and Lys86 each bind ATP. The active-site Proton acceptor is Asp175. Ser220 is subject to Phosphoserine; by autocatalysis. Disordered regions lie at residues 331–373 (HNQG…NWGD), 423–488 (ETLV…QLPL), and 529–564 (WAGE…EPDE). At Arg338 the chain carries Omega-N-methylarginine. Residues 348–357 (PDPRLSRSRS) are compositionally biased toward basic and acidic residues. Residues 419–524 (VTTPETLVQP…NNNPPAVVVN (106 aa)) form a required for interaction with YWHAB region. Over residues 476–485 (EPEPPGPAPQ) the composition is skewed to pro residues. Residues 527-624 (QGWAGEPWNR…PTPSLQLPGA (98 aa)) are required for interaction with PARVA. A required for interaction with SPRED1 and SPRY2. Required for TESK1-mediated dephosphorylation of SPRY2 and SPRY2 inhibition of ERK phosphorylation region spans residues 527-626 (QGWAGEPWNR…PSLQLPGARS (100 aa)).

The protein belongs to the protein kinase superfamily. TKL Ser/Thr protein kinase family. Interacts (via both C- and N-termini) with SPRY4 (via C-terminus); the interaction inhibits TESK1 kinase activity. Interacts with TAOK1; the interaction inhibits TAOK1 kinase activity. Interacts (via C-terminus) with SPRED1 (via C-terminus); the interaction inhibits TESK1 kinase activity. Interacts (via C-terminus) with PARVA/PARVIN (via C-terminus); the interaction inhibits TESK1 kinase activity. Interacts with YWHAB/14-3-3 beta; the interaction is dependent on the phosphorylation of TESK1 Ser-437 and inhibits TESK1 kinase activity. Interacts with SPRY1, SPRY3 and SPRED2. Interacts (via C-terminus) with SPRY2 (via C-terminus); the interaction disrupts SPRY2 interaction with PPP2CA/PP2A-C, possibly by vesicular sequestration of SPRY2. Therefore dephosphorylation of SPRY2 by the serine/threonine-protein phosphatase 2A (PP2A) holoenzyme is lost, inhibiting its interaction with GRB2. Mg(2+) serves as cofactor. Requires Mn(2+) as cofactor. Autophosphorylated on serine and tyrosine residues. As to expression, expressed in podocytes and renal tubular cells in the kidney (at protein level).

The protein localises to the cytoplasm. The protein resides in the perinuclear region. It is found in the cytoskeleton. Its subcellular location is the microtubule organizing center. It localises to the centrosome. The protein localises to the cell projection. The protein resides in the lamellipodium. The catalysed reaction is L-seryl-[protein] + ATP = O-phospho-L-seryl-[protein] + ADP + H(+). It catalyses the reaction L-threonyl-[protein] + ATP = O-phospho-L-threonyl-[protein] + ADP + H(+). The enzyme catalyses L-tyrosyl-[protein] + ATP = O-phospho-L-tyrosyl-[protein] + ADP + H(+). Its activity is regulated as follows. Activated by autophosphorylation on Ser-220. Kinase activity is inhibited by SPRED1. Dual specificity protein kinase activity catalyzing autophosphorylation and phosphorylation of exogenous substrates on both serine/threonine and tyrosine residues. Regulates the cellular cytoskeleton by enhancing actin stress fiber formation via phosphorylation of cofilin and by preventing microtubule breakdown via inhibition of TAOK1/MARKK kinase activity. Inhibits podocyte motility via regulation of actin cytoskeletal dynamics and phosphorylation of CFL1. Positively regulates integrin-mediated cell spreading, via phosphorylation of cofilin. Suppresses ciliogenesis via multiple pathways; phosphorylation of CFL1, suppression of ciliary vesicle directional trafficking to the ciliary base, and by facilitating YAP1 nuclear localization where it acts as a transcriptional corepressor of the TEAD4 target genes AURKA and PLK1. Probably plays a central role at and after the meiotic phase of spermatogenesis. The chain is Dual specificity testis-specific protein kinase 1 (TESK1) from Homo sapiens (Human).